We begin with the raw amino-acid sequence, 390 residues long: Dual-specificity RNA methyltransferase RlmN (390 aa).

Glu-111 (proton acceptor) is an active-site residue. The Radical SAM core domain maps to 117–356 (EDDRATLCVS…VIVRKTRGDD (240 aa)). A disulfide bridge links Cys-124 with Cys-361. The [4Fe-4S] cluster site is built by Cys-131, Cys-135, and Cys-138. S-adenosyl-L-methionine-binding positions include 185 to 186 (GE), Ser-217, 239 to 241 (SLH), and Asn-318. Catalysis depends on Cys-361, which acts as the S-methylcysteine intermediate.

Belongs to the radical SAM superfamily. RlmN family. Requires [4Fe-4S] cluster as cofactor.

Its subcellular location is the cytoplasm. The catalysed reaction is adenosine(2503) in 23S rRNA + 2 reduced [2Fe-2S]-[ferredoxin] + 2 S-adenosyl-L-methionine = 2-methyladenosine(2503) in 23S rRNA + 5'-deoxyadenosine + L-methionine + 2 oxidized [2Fe-2S]-[ferredoxin] + S-adenosyl-L-homocysteine. The enzyme catalyses adenosine(37) in tRNA + 2 reduced [2Fe-2S]-[ferredoxin] + 2 S-adenosyl-L-methionine = 2-methyladenosine(37) in tRNA + 5'-deoxyadenosine + L-methionine + 2 oxidized [2Fe-2S]-[ferredoxin] + S-adenosyl-L-homocysteine. Functionally, specifically methylates position 2 of adenine 2503 in 23S rRNA and position 2 of adenine 37 in tRNAs. m2A2503 modification seems to play a crucial role in the proofreading step occurring at the peptidyl transferase center and thus would serve to optimize ribosomal fidelity. In Edwardsiella ictaluri (strain 93-146), this protein is Dual-specificity RNA methyltransferase RlmN.